The primary structure comprises 273 residues: 2,3,4,5-tetrahydropyridine-2,6-dicarboxylate N-succinyltransferase (273 aa).

The protein belongs to the transferase hexapeptide repeat family.

Its subcellular location is the cytoplasm. The enzyme catalyses (S)-2,3,4,5-tetrahydrodipicolinate + succinyl-CoA + H2O = (S)-2-succinylamino-6-oxoheptanedioate + CoA. Its pathway is amino-acid biosynthesis; L-lysine biosynthesis via DAP pathway; LL-2,6-diaminopimelate from (S)-tetrahydrodipicolinate (succinylase route): step 1/3. The sequence is that of 2,3,4,5-tetrahydropyridine-2,6-dicarboxylate N-succinyltransferase from Bordetella petrii (strain ATCC BAA-461 / DSM 12804 / CCUG 43448).